The following is a 360-amino-acid chain: Cyclin-dependent kinase 10 (360 aa).

The Protein kinase domain occupies 39–323; it reads FEKLNRIGEG…AGDCLESSYF (285 aa). ATP is bound by residues 45–53 and K68; that span reads IGEGTYGIV. The active-site Proton acceptor is D163. Phosphothreonine is present on T196. Positions 334 to 360 are disordered; it reads LMPTFPHHRNKRAAPATSEGQSKRCKP.

This sequence belongs to the protein kinase superfamily. CMGC Ser/Thr protein kinase family. CDC2/CDKX subfamily. In terms of assembly, heterodimer with CCNQ, the interaction is required for kinase activity. Interacts with ETS2. Interacts with PRK2.

It localises to the cytoplasm. It is found in the cytoskeleton. The protein resides in the cilium basal body. It catalyses the reaction L-seryl-[protein] + ATP = O-phospho-L-seryl-[protein] + ADP + H(+). It carries out the reaction L-threonyl-[protein] + ATP = O-phospho-L-threonyl-[protein] + ADP + H(+). Functionally, cyclin-dependent kinase that phosphorylates the transcription factor ETS2 (in vitro) and positively controls its proteasomal degradation (in cells). Involved in the regulation of actin cytoskeleton organization through the phosphorylation of actin dynamics regulators such as PKN2. Is a negative regulator of ciliogenesis through phosphorylation of PKN2 and promotion of RhoA signaling. This Homo sapiens (Human) protein is Cyclin-dependent kinase 10 (CDK10).